Reading from the N-terminus, the 416-residue chain is Serine hydroxymethyltransferase 1 (416 aa).

Residues Leu-121 and 125-127 (GHL) each bind (6S)-5,6,7,8-tetrahydrofolate. At Lys-229 the chain carries N6-(pyridoxal phosphate)lysine. (6S)-5,6,7,8-tetrahydrofolate contacts are provided by residues Glu-245 and 354 to 356 (SPF).

This sequence belongs to the SHMT family. In terms of assembly, homodimer. Requires pyridoxal 5'-phosphate as cofactor.

It localises to the cytoplasm. The catalysed reaction is (6R)-5,10-methylene-5,6,7,8-tetrahydrofolate + glycine + H2O = (6S)-5,6,7,8-tetrahydrofolate + L-serine. The protein operates within one-carbon metabolism; tetrahydrofolate interconversion. Its pathway is amino-acid biosynthesis; glycine biosynthesis; glycine from L-serine: step 1/1. Functionally, catalyzes the reversible interconversion of serine and glycine with tetrahydrofolate (THF) serving as the one-carbon carrier. This reaction serves as the major source of one-carbon groups required for the biosynthesis of purines, thymidylate, methionine, and other important biomolecules. Also exhibits THF-independent aldolase activity toward beta-hydroxyamino acids, producing glycine and aldehydes, via a retro-aldol mechanism. The sequence is that of Serine hydroxymethyltransferase 1 from Vibrio cholerae serotype O1 (strain ATCC 39315 / El Tor Inaba N16961).